The primary structure comprises 381 residues: Putative F-box protein At4g17200 (381 aa).

The 47-residue stretch at 1–47 folds into the F-box domain; it reads MTTMSDLSPDLVGEILTRVPMTSLISVRCTCKMWNALSKEGIFFKAA.

The protein is Putative F-box protein At4g17200 of Arabidopsis thaliana (Mouse-ear cress).